Here is a 557-residue protein sequence, read N- to C-terminus: 2-succinyl-5-enolpyruvyl-6-hydroxy-3-cyclohexene-1-carboxylate synthase (557 aa).

It belongs to the TPP enzyme family. MenD subfamily. Homodimer. It depends on Mg(2+) as a cofactor. Mn(2+) serves as cofactor. Thiamine diphosphate is required as a cofactor.

It carries out the reaction isochorismate + 2-oxoglutarate + H(+) = 5-enolpyruvoyl-6-hydroxy-2-succinyl-cyclohex-3-ene-1-carboxylate + CO2. Its pathway is quinol/quinone metabolism; 1,4-dihydroxy-2-naphthoate biosynthesis; 1,4-dihydroxy-2-naphthoate from chorismate: step 2/7. It functions in the pathway quinol/quinone metabolism; menaquinone biosynthesis. Functionally, catalyzes the thiamine diphosphate-dependent decarboxylation of 2-oxoglutarate and the subsequent addition of the resulting succinic semialdehyde-thiamine pyrophosphate anion to isochorismate to yield 2-succinyl-5-enolpyruvyl-6-hydroxy-3-cyclohexene-1-carboxylate (SEPHCHC). The protein is 2-succinyl-5-enolpyruvyl-6-hydroxy-3-cyclohexene-1-carboxylate synthase of Serratia proteamaculans (strain 568).